The primary structure comprises 256 residues: Acetyl-coenzyme A carboxylase carboxyl transferase subunit alpha (256 aa).

The CoA carboxyltransferase C-terminal domain occupies Met-1 to Gln-236.

Belongs to the AccA family. Acetyl-CoA carboxylase is a heterohexamer composed of biotin carboxyl carrier protein (AccB), biotin carboxylase (AccC) and two subunits each of ACCase subunit alpha (AccA) and ACCase subunit beta (AccD).

Its subcellular location is the cytoplasm. It carries out the reaction N(6)-carboxybiotinyl-L-lysyl-[protein] + acetyl-CoA = N(6)-biotinyl-L-lysyl-[protein] + malonyl-CoA. It functions in the pathway lipid metabolism; malonyl-CoA biosynthesis; malonyl-CoA from acetyl-CoA: step 1/1. In terms of biological role, component of the acetyl coenzyme A carboxylase (ACC) complex. First, biotin carboxylase catalyzes the carboxylation of biotin on its carrier protein (BCCP) and then the CO(2) group is transferred by the carboxyltransferase to acetyl-CoA to form malonyl-CoA. The polypeptide is Acetyl-coenzyme A carboxylase carboxyl transferase subunit alpha (Streptococcus equi subsp. zooepidemicus (strain H70)).